We begin with the raw amino-acid sequence, 748 residues long: CCR4-NOT transcription complex subunit 10-B (748 aa).

Residues 1 to 16 are compositionally biased toward basic and acidic residues; that stretch reads MAADKAGEQGAEKHEG. 3 disordered regions span residues 1 to 25, 483 to 524, and 605 to 634; these read MAAD…GISD, KQEN…PPSS, and VSLG…KQIP. Composition is skewed to polar residues over residues 487–509 and 605–615; these read GSKA…VCSN and VSLGVSSNEQE.

This sequence belongs to the CNOT10 family. In terms of assembly, component of the CCR4-NOT complex. cnot10 and cnot11 form a subcomplex docked to the cnot1 scaffold.

It is found in the cytoplasm. The protein resides in the nucleus. Functionally, component of the CCR4-NOT complex which is one of the major cellular mRNA deadenylases and is linked to various cellular processes including bulk mRNA degradation, miRNA-mediated repression, translational repression during translational initiation and general transcription regulation. Additional complex functions may be a consequence of its influence on mRNA expression. Is not required for association of CNOT7 to the CCR4-NOT complex. This chain is CCR4-NOT transcription complex subunit 10-B (cnot10-b), found in Xenopus laevis (African clawed frog).